We begin with the raw amino-acid sequence, 242 residues long: Proteasome subunit alpha (242 aa).

It belongs to the peptidase T1A family. The 20S proteasome core is composed of 14 alpha and 14 beta subunits that assemble into four stacked heptameric rings, resulting in a barrel-shaped structure. The two inner rings, each composed of seven catalytic beta subunits, are sandwiched by two outer rings, each composed of seven alpha subunits. The catalytic chamber with the active sites is on the inside of the barrel. Has a gated structure, the ends of the cylinder being occluded by the N-termini of the alpha-subunits. Is capped by the proteasome-associated ATPase, ARC.

Its subcellular location is the cytoplasm. Its pathway is protein degradation; proteasomal Pup-dependent pathway. The formation of the proteasomal ATPase ARC-20S proteasome complex, likely via the docking of the C-termini of ARC into the intersubunit pockets in the alpha-rings, may trigger opening of the gate for substrate entry. Interconversion between the open-gate and close-gate conformations leads to a dynamic regulation of the 20S proteasome proteolysis activity. Its function is as follows. Component of the proteasome core, a large protease complex with broad specificity involved in protein degradation. The chain is Proteasome subunit alpha from Renibacterium salmoninarum (strain ATCC 33209 / DSM 20767 / JCM 11484 / NBRC 15589 / NCIMB 2235).